The following is a 478-amino-acid chain: Ninja-family protein 7 (478 aa).

Disordered regions lie at residues 1–247 (MDDD…LTPG), 336–374 (SFTAKDKADQTGTKQVDDGKKPREAGASSSAHAEDEKKA), and 454–478 (DAPAQDNSATLPAFPAGNQATSAEN). Positions 23 to 35 (KARDAPLEPKAEP) are enriched in basic and acidic residues. Residues 169 to 179 (ISISTDDGSTG) show a composition bias toward polar residues. Positions 180-189 (ENEDVAESEA) are enriched in acidic residues. A compositionally biased stretch (low complexity) spans 233–242 (SFSGSESSSG). Residues 339 to 359 (AKDKADQTGTKQVDDGKKPRE) are compositionally biased toward basic and acidic residues.

It belongs to the Ninja family.

The protein localises to the nucleus. This chain is Ninja-family protein 7, found in Zea mays (Maize).